The sequence spans 1677 residues: Vitellogenin (1677 aa).

An N-terminal signal peptide occupies residues 1-8; that stretch reads LTIALVGS. The Vitellogenin domain maps to 17–655; it reads FSGSKTYQYK…NAASILPSAV (639 aa). Disordered stretches follow at residues 1089 to 1232 and 1252 to 1280; these read TLRG…SEEI and FQNK…SKQD. Residues 1098–1122 are compositionally biased toward low complexity; that stretch reads SSSSSSSSSSSSSSSSSSSSSSQQS. Basic and acidic residues predominate over residues 1123–1145; the sequence is RMEKRMEQDKLTENLERDRDHMR. The segment covering 1169-1196 has biased composition (low complexity); that stretch reads SSSSSSSSSSSGSNSSSSSSSSSSSSSR. Asn-1182, Asn-1202, Asn-1217, and Asn-1218 each carry an N-linked (GlcNAc...) asparagine glycan. Residues 1197–1212 are compositionally biased toward basic residues; sequence SHNHRNNTRTLSKSKR. 2 stretches are compositionally biased toward low complexity: residues 1215 to 1229 and 1260 to 1273; these read NNNN…SSSS and SSSS…SSQS. In terms of domain architecture, VWFD spans 1490 to 1675; it reads SKCVAQENKF…TATEAASFCV (186 aa). Intrachain disulfides connect Cys-1492-Cys-1631 and Cys-1515-Cys-1674. Basic and acidic residues predominate over residues 1636 to 1649; that stretch reads GERRKEFRMPDGRQ. Residues 1636 to 1659 are disordered; sequence GERRKEFRMPDGRQARGPSVSPTP.

In terms of processing, phosvitin, an egg yolk storage protein, is one of the most highly phosphorylated (10%) proteins in nature. As to expression, found in liver, testis and undifferentiated gonads of estrogen-treated fish. Not detected in the brain and spleen.

In terms of biological role, precursor of the major egg-yolk proteins that are sources of nutrients during early development of oviparous organisms. The sequence is that of Vitellogenin from Acipenser transmontanus (White sturgeon).